The primary structure comprises 300 residues: Telomere repeat-binding factor 1 (300 aa).

Residues 1 to 58 (MGAPKQKWTQEEESALKSGVIKHGPGKWRTILKDPEFSGVLYLRSNVDLKDKWRNMSV) form the HTH myb-type domain. Residues 28–57 (WRTILKDPEFSGVLYLRSNVDLKDKWRNMS) constitute a DNA-binding region (H-T-H motif). Disordered stretches follow at residues 93–119 (LQSDEENVDATSGLQVSSNPPPRRPNV) and 185–213 (NSTPLSSHRRKGLGVFGGKQRTSSLPSPK). Residues 117–185 (PNVRLDSLIM…KVKRKYRIPN (69 aa)) enclose the H15 domain. Residues 241 to 290 (EAAAVAAQAVAEAEAAMAEAEEAAKEAEAAEAEAEAAQAFAEEASKTLKG) adopt a coiled-coil conformation.

This sequence belongs to the histone H1/H5 family. SMH subfamily. In terms of assembly, forms a homodimer and heterodimers with TRB2 or TRB3. Interacts with POT1b, TRB2 and TRB3 through its H15 domain.

It is found in the nucleus. The protein localises to the nucleolus. It localises to the chromosome. Its function is as follows. Binds preferentially double-stranded telomeric repeats. The sequence is that of Telomere repeat-binding factor 1 (TRB1) from Arabidopsis thaliana (Mouse-ear cress).